A 224-amino-acid polypeptide reads, in one-letter code: MATTMKGLLKGLRYITQIFDEEKEQEMQIGFPTDVKHVAHIGSDGPTNTTPSWMNDFKTQEHEKGQVVSRGNSNKYNPQGTNQRGAGLKELLPSNTNEKPKQKTRRKPGGAASPNHNGSPPRKSSGNAASSDEPSKHSRHNRSAHGSTDSSNDQEPSVRRRRGGIPAPDTEVPNQIPDGSAPPRKATSRPRKLKGSSAGGEGSIKKSSKGKPENSVDTTCNDII.

Residues 29-42 (IGFPTDVKHVAHIG) enclose the CRIB domain. The segment at 38 to 224 (VAHIGSDGPT…SVDTTCNDII (187 aa)) is disordered. Composition is skewed to polar residues over residues 69 to 84 (SRGN…TNQR), 114 to 132 (PNHN…ASSD), 144 to 155 (AHGSTDSSNDQE), and 215 to 224 (SVDTTCNDII).

Interacts with ARAC11/ROP1. In terms of tissue distribution, expressed in columella cells from the root tip and epidermal cells at the base of lateral roots, leaves, stems, flowers, anthers, pollen and siliques.

The protein localises to the cytoplasm. It localises to the cytoskeleton. Functions as a downstream effector of Rho-related GTP binding proteins of the 'Rho of Plants' (ROPs) family. Participates in the propagation of ROP GTPase signals in specific cellular responses. Required for cortical microtubule organization. Promotes microtubule bundling and formation of well-ordered microtubule arrays in the neck region of pavement cells. This restricts cell lateral expansion to generate the narrow neck morphology of pavement cells. Its function is inhibited when it interacts with activated ARAC4/ROP2. Represses ARAC4/ROP2 activation and antagonizes the RIC4-actin pathway that promotes the assembly of cortical actin microfilaments. Acts as a downstream effector of ARAC3/ROP6 which functions in a signaling pathway that negatively regulates clathrin-mediated endocytosis and internalization of PIN1 and PIN2. Required for the asymmetric auxin distribution during root gravitropism and vascular patterning. Positively regulates auxin responses, but negatively regulates ABA responses during lateral root development and primary root elongation. The protein is CRIB domain-containing protein RIC1 (RIC1) of Arabidopsis thaliana (Mouse-ear cress).